The chain runs to 327 residues: Undecaprenyl-phosphate 4-deoxy-4-formamido-L-arabinose transferase (327 aa).

2 consecutive transmembrane segments (helical) span residues 236-256 (LSLV…LLVV) and 270-290 (VFTL…GMGL).

This sequence belongs to the glycosyltransferase 2 family.

The protein resides in the cell inner membrane. The catalysed reaction is UDP-4-deoxy-4-formamido-beta-L-arabinose + di-trans,octa-cis-undecaprenyl phosphate = 4-deoxy-4-formamido-alpha-L-arabinopyranosyl di-trans,octa-cis-undecaprenyl phosphate + UDP. It participates in glycolipid biosynthesis; 4-amino-4-deoxy-alpha-L-arabinose undecaprenyl phosphate biosynthesis; 4-amino-4-deoxy-alpha-L-arabinose undecaprenyl phosphate from UDP-4-deoxy-4-formamido-beta-L-arabinose and undecaprenyl phosphate: step 1/2. It functions in the pathway bacterial outer membrane biogenesis; lipopolysaccharide biosynthesis. Catalyzes the transfer of 4-deoxy-4-formamido-L-arabinose from UDP to undecaprenyl phosphate. The modified arabinose is attached to lipid A and is required for resistance to polymyxin and cationic antimicrobial peptides. This is Undecaprenyl-phosphate 4-deoxy-4-formamido-L-arabinose transferase from Yersinia enterocolitica serotype O:8 / biotype 1B (strain NCTC 13174 / 8081).